The sequence spans 178 residues: Large ribosomal subunit protein uL6 (178 aa).

Belongs to the universal ribosomal protein uL6 family. Part of the 50S ribosomal subunit.

Its function is as follows. This protein binds to the 23S rRNA, and is important in its secondary structure. It is located near the subunit interface in the base of the L7/L12 stalk, and near the tRNA binding site of the peptidyltransferase center. The protein is Large ribosomal subunit protein uL6 of Listeria monocytogenes serotype 4a (strain HCC23).